The chain runs to 141 residues: Large ribosomal subunit protein uL11 (141 aa).

This sequence belongs to the universal ribosomal protein uL11 family. Part of the ribosomal stalk of the 50S ribosomal subunit. Interacts with L10 and the large rRNA to form the base of the stalk. L10 forms an elongated spine to which L12 dimers bind in a sequential fashion forming a multimeric L10(L12)X complex. In terms of processing, one or more lysine residues are methylated.

Functionally, forms part of the ribosomal stalk which helps the ribosome interact with GTP-bound translation factors. The chain is Large ribosomal subunit protein uL11 from Prochlorococcus marinus subsp. pastoris (strain CCMP1986 / NIES-2087 / MED4).